The chain runs to 314 residues: DNA-directed RNA polymerase subunit alpha (314 aa).

The tract at residues 1–229 (MLESKLKAPV…EHLNYFANPE (229 aa)) is alpha N-terminal domain (alpha-NTD). An alpha C-terminal domain (alpha-CTD) region spans residues 246-314 (SAEEDLDLPL…LAKKGFTLKE (69 aa)).

It belongs to the RNA polymerase alpha chain family. Homodimer. The RNAP catalytic core consists of 2 alpha, 1 beta, 1 beta' and 1 omega subunit. When a sigma factor is associated with the core the holoenzyme is formed, which can initiate transcription.

It carries out the reaction RNA(n) + a ribonucleoside 5'-triphosphate = RNA(n+1) + diphosphate. Functionally, DNA-dependent RNA polymerase catalyzes the transcription of DNA into RNA using the four ribonucleoside triphosphates as substrates. This Thermus aquaticus protein is DNA-directed RNA polymerase subunit alpha (rpoA).